The primary structure comprises 187 residues: MNETQIQRETRQVVEDVLEKTNLKQGVLFVLGLSSSEVLGGQIGKESSQEIGELIVETILGILGSRGIHLAVQGCEHVNRALVVERQVAEQFDLEIVSVHPTLHAGGSGQLAAFKFMQDPVEVEFIKAHAGLDIGDTAIGMHVKHVQVPIRPILREIGHAHVTALASRPKLIGGARAHYPQDAIRKS.

The protein belongs to the UPF0340 family.

This chain is UPF0340 protein SPP_0683, found in Streptococcus pneumoniae (strain P1031).